The following is a 268-amino-acid chain: Tryptophan synthase alpha chain (268 aa).

Residues glutamate 49 and aspartate 60 each act as proton acceptor in the active site.

Belongs to the TrpA family. In terms of assembly, tetramer of two alpha and two beta chains.

The catalysed reaction is (1S,2R)-1-C-(indol-3-yl)glycerol 3-phosphate + L-serine = D-glyceraldehyde 3-phosphate + L-tryptophan + H2O. The protein operates within amino-acid biosynthesis; L-tryptophan biosynthesis; L-tryptophan from chorismate: step 5/5. Its function is as follows. The alpha subunit is responsible for the aldol cleavage of indoleglycerol phosphate to indole and glyceraldehyde 3-phosphate. The sequence is that of Tryptophan synthase alpha chain from Aeromonas salmonicida (strain A449).